The sequence spans 338 residues: Lipoate-protein ligase A (338 aa).

The region spanning 29–216 is the BPL/LPL catalytic domain; it reads PATQRVLFLW…AFFAHYGERV (188 aa). ATP-binding positions include Arg-71, 76-79, and Lys-134; that span reads GAVF. Lys-134 lines the (R)-lipoate pocket.

This sequence belongs to the LplA family. As to quaternary structure, monomer.

The protein localises to the cytoplasm. The enzyme catalyses L-lysyl-[lipoyl-carrier protein] + (R)-lipoate + ATP = N(6)-[(R)-lipoyl]-L-lysyl-[lipoyl-carrier protein] + AMP + diphosphate + H(+). It functions in the pathway protein modification; protein lipoylation via exogenous pathway; protein N(6)-(lipoyl)lysine from lipoate: step 1/2. Its pathway is protein modification; protein lipoylation via exogenous pathway; protein N(6)-(lipoyl)lysine from lipoate: step 2/2. Functionally, catalyzes both the ATP-dependent activation of exogenously supplied lipoate to lipoyl-AMP and the transfer of the activated lipoyl onto the lipoyl domains of lipoate-dependent enzymes. This chain is Lipoate-protein ligase A, found in Escherichia coli O81 (strain ED1a).